The chain runs to 241 residues: ATP synthase subunit a (241 aa).

The next 5 helical transmembrane spans lie at 30–50 (GQVF…ISVG), 91–111 (FIGT…LIPW), 128–148 (INTT…AGLS), 193–213 (LVVG…VMFL), and 214–234 (GLFT…YYIG).

The protein belongs to the ATPase A chain family. In terms of assembly, F-type ATPases have 2 components, CF(1) - the catalytic core - and CF(0) - the membrane proton channel. CF(1) has five subunits: alpha(3), beta(3), gamma(1), delta(1), epsilon(1). CF(0) has four main subunits: a, b, b' and c.

Its subcellular location is the cellular thylakoid membrane. In terms of biological role, key component of the proton channel; it plays a direct role in the translocation of protons across the membrane. The protein is ATP synthase subunit a of Prochlorococcus marinus subsp. pastoris (strain CCMP1986 / NIES-2087 / MED4).